The sequence spans 361 residues: Probable dual-specificity RNA methyltransferase RlmN (361 aa).

Glu99 serves as the catalytic Proton acceptor. The region spanning Gly105–Pro342 is the Radical SAM core domain. Residues Cys112 and Cys347 are joined by a disulfide bond. Positions 119, 123, and 126 each coordinate [4Fe-4S] cluster. S-adenosyl-L-methionine contacts are provided by residues Gly171–Glu172, Ser204, Ser227–His229, and Asn304. Cys347 serves as the catalytic S-methylcysteine intermediate.

This sequence belongs to the radical SAM superfamily. RlmN family. The cofactor is [4Fe-4S] cluster.

The protein localises to the cytoplasm. The catalysed reaction is adenosine(2503) in 23S rRNA + 2 reduced [2Fe-2S]-[ferredoxin] + 2 S-adenosyl-L-methionine = 2-methyladenosine(2503) in 23S rRNA + 5'-deoxyadenosine + L-methionine + 2 oxidized [2Fe-2S]-[ferredoxin] + S-adenosyl-L-homocysteine. It carries out the reaction adenosine(37) in tRNA + 2 reduced [2Fe-2S]-[ferredoxin] + 2 S-adenosyl-L-methionine = 2-methyladenosine(37) in tRNA + 5'-deoxyadenosine + L-methionine + 2 oxidized [2Fe-2S]-[ferredoxin] + S-adenosyl-L-homocysteine. Specifically methylates position 2 of adenine 2503 in 23S rRNA and position 2 of adenine 37 in tRNAs. The protein is Probable dual-specificity RNA methyltransferase RlmN of Chlorobium luteolum (strain DSM 273 / BCRC 81028 / 2530) (Pelodictyon luteolum).